A 329-amino-acid chain; its full sequence is Protein-arginine N-acetylglucosaminyltransferase NleB1 (329 aa).

N-beta-linked (GlcNAc) arginine; by autocatalysis glycosylation is present at Arg-13. A UDP-N-acetyl-alpha-D-glucosamine-binding site is contributed by 48 to 50 (QWF). Arg-53 carries N-beta-linked (GlcNAc) arginine; by autocatalysis glycosylation. Tyr-72 serves as a coordination point for UDP-N-acetyl-alpha-D-glucosamine. N-beta-linked (GlcNAc) arginine; by autocatalysis glycosylation is present at Arg-159. 219–222 (YLDA) lines the UDP-N-acetyl-alpha-D-glucosamine pocket. The DXD motif signature appears at 221–223 (DAD). Mn(2+) is bound at residue Asp-223. Glu-253 (proton acceptor) is an active-site residue. Residue Arg-293 is glycosylated (N-beta-linked (GlcNAc) arginine; by autocatalysis). Mn(2+) is bound by residues Asn-320 and Ser-322. Residues Ser-322 and 327–329 (SSW) contribute to the UDP-N-acetyl-alpha-D-glucosamine site.

The protein belongs to the glycosyltransferase NleB family. It depends on Mn(2+) as a cofactor. In terms of processing, auto-glycosylated: arginine GlcNAcylation is required for activity toward death domain-containing host target proteins.

The protein localises to the secreted. Its subcellular location is the host cytoplasm. It catalyses the reaction L-arginyl-[protein] + UDP-N-acetyl-alpha-D-glucosamine = N(omega)-(N-acetyl-beta-D-glucosaminyl)-L-arginyl-[protein] + UDP + H(+). Functionally, protein-arginine N-acetylglucosaminyltransferase effector that disrupts TNF signaling in infected cells, including NF-kappa-B signaling, apoptosis and necroptosis. Acts by catalyzing the transfer of a single N-acetylglucosamine (GlcNAc) to a conserved arginine residue in the death domain of host proteins FADD, TRADD, FAS, TNFRSF1A/TNFR1, TNFRSF25/DR3 and RIPK1: arginine GlcNAcylation prevents homotypic/heterotypic death domain interactions and assembly of the oligomeric TNF-alpha receptor complex, thereby disrupting TNF signaling. Has preference for host FADD as substrate compared to other death domain-containing proteins. Also acts on host proteins without a death domain: catalyzes arginine GlcNAcylation of HIF1A, thereby regulating host glucose metabolism. Also displays intra-bacterial activity by mediating GlcNAcylation of glutathione synthetase GshB. Catalyzes auto-GlcNAcylation, which is required for activity toward death domain-containing host target proteins. Shows a higher enzymatic activity than NleB2. This Escherichia coli O127:H6 (strain E2348/69 / EPEC) protein is Protein-arginine N-acetylglucosaminyltransferase NleB1.